We begin with the raw amino-acid sequence, 179 residues long: Alpha-tubulin N-acetyltransferase (179 aa).

Residues 1 to 175 (MRVEVVRAPG…NRFVVFDAYF (175 aa)) form the N-acetyltransferase domain. Acetyl-CoA is bound by residues 109–122 (FYVD…GVGL) and 145–154 (SPKLFAFLKK).

Belongs to the acetyltransferase ATAT1 family.

It catalyses the reaction L-lysyl-[alpha-tubulin] + acetyl-CoA = N(6)-acetyl-L-lysyl-[alpha-tubulin] + CoA + H(+). Functionally, specifically acetylates 'Lys-40' in alpha-tubulin on the lumenal side of microtubules. Promotes microtubule destabilization and accelerates microtubule dynamics; this activity may be independent of acetylation activity. Acetylates alpha-tubulin with a slow enzymatic rate, due to a catalytic site that is not optimized for acetyl transfer. Enters the microtubule through each end and diffuses quickly throughout the lumen of microtubules. Acetylates only long/old microtubules because of its slow acetylation rate since it does not have time to act on dynamically unstable microtubules before the enzyme is released. This is Alpha-tubulin N-acetyltransferase from Phytophthora infestans (strain T30-4) (Potato late blight agent).